The following is a 510-amino-acid chain: NADH-quinone oxidoreductase subunit N (510 aa).

The next 14 membrane-spanning stretches (helical) occupy residues 14–34, 42–62, 84–104, 113–133, 135–155, 170–190, 208–228, 247–267, 286–306, 323–343, 346–366, 390–410, 426–446, and 466–486; these read LLPE…DLFA, VIGW…IINM, AFKL…LSYL, GEYY…ASSA, LITL…LVGL, VVSG…VYGL, MAGY…GLAF, PTPV…ALIF, FFFE…MIIG, SGIA…SLFF, VIFY…VIMV, AIAM…VGFF, WLAA…FGII, and IWTF…FPGL.

It belongs to the complex I subunit 2 family. As to quaternary structure, NDH-1 is composed of 14 different subunits. Subunits NuoA, H, J, K, L, M, N constitute the membrane sector of the complex.

The protein localises to the cell membrane. It carries out the reaction a quinone + NADH + 5 H(+)(in) = a quinol + NAD(+) + 4 H(+)(out). In terms of biological role, NDH-1 shuttles electrons from NADH, via FMN and iron-sulfur (Fe-S) centers, to quinones in the respiratory chain. The immediate electron acceptor for the enzyme in this species is believed to be a menaquinone. Couples the redox reaction to proton translocation (for every two electrons transferred, four hydrogen ions are translocated across the cytoplasmic membrane), and thus conserves the redox energy in a proton gradient. The chain is NADH-quinone oxidoreductase subunit N from Brevibacillus brevis (strain 47 / JCM 6285 / NBRC 100599).